Consider the following 982-residue polypeptide: Polyribonucleotide nucleotidyltransferase 2, mitochondrial (982 aa).

The N-terminal 39 residues, methionine 1 to alanine 39, are a transit peptide targeting the mitochondrion. The KH domain maps to proline 624–valine 678. An S1 motif 1 domain is found at glycine 689–lysine 757. Disordered stretches follow at residues proline 792–proline 814 and glutamine 832–leucine 892. Low complexity-rich tracts occupy residues alanine 846–proline 855 and lysine 868–alanine 877. The S1 motif 2 domain occupies glycine 920–aspartate 982.

It belongs to the polyribonucleotide nucleotidyltransferase family.

The protein resides in the mitochondrion. It carries out the reaction RNA(n+1) + phosphate = RNA(n) + a ribonucleoside 5'-diphosphate. Functionally, involved in the 3'-end maturation of mitochondrial mRNAs, rRNAs and tRNAs. Functions as a poly(A) mRNA 3'-5' degrading phosphorylase. The sequence is that of Polyribonucleotide nucleotidyltransferase 2, mitochondrial (PNP2) from Oryza sativa subsp. japonica (Rice).